Consider the following 228-residue polypeptide: Probable septum site-determining protein MinC (228 aa).

It belongs to the MinC family. In terms of assembly, interacts with MinD and FtsZ.

In terms of biological role, cell division inhibitor that blocks the formation of polar Z ring septums. Rapidly oscillates between the poles of the cell to destabilize FtsZ filaments that have formed before they mature into polar Z rings. Prevents FtsZ polymerization. This chain is Probable septum site-determining protein MinC, found in Bacillus cereus (strain G9842).